Reading from the N-terminus, the 634-residue chain is Probable potassium transport system protein Kup (634 aa).

A run of 12 helical transmembrane segments spans residues 19–39 (AVGLMVGAVGVCYGDIGTSPL), 62–82 (VLSLIFWSLIWVVSIKYVIFV), 113–133 (FVVVAGLIGAALFYGDSMITP), 150–170 (GLEHWTVPLALIVLIGLFLIQ), 177–197 (IGILFGPVMVLWFGALAALGV), 225–245 (IGVAILGATVLALTGAEALYA), 259–279 (WFLLVLPALVLNYFGQGATIL), 291–311 (LLAPGWALLPMVALSTLATVI), 349–369 (IYIGGVNWALMVGVVLLVLGF), 379–399 (YGVAVTGTMLITTLLMGVVIW), 406–426 (LWLGVPFFCVMLAVDSLFFAA), and 431–451 (VVQGGAFPVIAGIVIFILMST).

The protein belongs to the HAK/KUP transporter (TC 2.A.72) family.

It localises to the cell inner membrane. It carries out the reaction K(+)(in) + H(+)(in) = K(+)(out) + H(+)(out). In terms of biological role, transport of potassium into the cell. Likely operates as a K(+):H(+) symporter. This chain is Probable potassium transport system protein Kup, found in Pseudomonas paraeruginosa (strain DSM 24068 / PA7) (Pseudomonas aeruginosa (strain PA7)).